We begin with the raw amino-acid sequence, 177 residues long: Nucleoside triphosphate/diphosphate phosphatase (177 aa).

Arginine 23 (proton donor) is an active-site residue. Mg(2+)-binding residues include asparagine 87, aspartate 103, aspartate 105, aspartate 107, aspartate 120, and glutamate 123.

The protein belongs to the Ntdp family. It depends on Mg(2+) as a cofactor.

It catalyses the reaction a ribonucleoside 5'-triphosphate + H2O = a ribonucleoside 5'-diphosphate + phosphate + H(+). The enzyme catalyses a ribonucleoside 5'-diphosphate + H2O = a ribonucleoside 5'-phosphate + phosphate + H(+). Functionally, has nucleoside phosphatase activity towards nucleoside triphosphates and nucleoside diphosphates. The polypeptide is Nucleoside triphosphate/diphosphate phosphatase (Streptococcus pneumoniae serotype 19F (strain G54)).